Consider the following 86-residue polypeptide: UPF0335 protein BruAb1_1737 (86 aa).

Belongs to the UPF0335 family.

In Brucella abortus biovar 1 (strain 9-941), this protein is UPF0335 protein BruAb1_1737.